Here is a 119-residue protein sequence, read N- to C-terminus: Putative yippee-like protein Os10g0369500 (119 aa).

The 98-residue stretch at 21–118 (AVLKCRRCRV…LEKARMWKEA (98 aa)) folds into the Yippee domain. Zn(2+)-binding residues include Cys-25, Cys-28, Cys-81, and Cys-84.

The protein belongs to the yippee family.

The chain is Putative yippee-like protein Os10g0369500 from Oryza sativa subsp. japonica (Rice).